The primary structure comprises 146 residues: Ribosome-binding factor A (146 aa).

A disordered region spans residues K121–A146. Positions D130–A146 are enriched in acidic residues.

This sequence belongs to the RbfA family. In terms of assembly, monomer. Binds 30S ribosomal subunits, but not 50S ribosomal subunits or 70S ribosomes.

The protein resides in the cytoplasm. One of several proteins that assist in the late maturation steps of the functional core of the 30S ribosomal subunit. Associates with free 30S ribosomal subunits (but not with 30S subunits that are part of 70S ribosomes or polysomes). Required for efficient processing of 16S rRNA. May interact with the 5'-terminal helix region of 16S rRNA. This Shewanella sp. (strain MR-4) protein is Ribosome-binding factor A.